Here is a 511-residue protein sequence, read N- to C-terminus: cAMP-regulated M3L protein (511 aa).

To D.discoideum protein M3R.

The polypeptide is cAMP-regulated M3L protein (prtA) (Dictyostelium discoideum (Social amoeba)).